Reading from the N-terminus, the 190-residue chain is Peptidyl-tRNA hydrolase (190 aa).

Tyrosine 14 is a binding site for tRNA. Residue histidine 19 is the Proton acceptor of the active site. Residues tyrosine 64, asparagine 66, and asparagine 112 each contribute to the tRNA site.

This sequence belongs to the PTH family. Monomer.

It localises to the cytoplasm. It catalyses the reaction an N-acyl-L-alpha-aminoacyl-tRNA + H2O = an N-acyl-L-amino acid + a tRNA + H(+). In terms of biological role, hydrolyzes ribosome-free peptidyl-tRNAs (with 1 or more amino acids incorporated), which drop off the ribosome during protein synthesis, or as a result of ribosome stalling. Its function is as follows. Catalyzes the release of premature peptidyl moieties from peptidyl-tRNA molecules trapped in stalled 50S ribosomal subunits, and thus maintains levels of free tRNAs and 50S ribosomes. This chain is Peptidyl-tRNA hydrolase, found in Chlorobium luteolum (strain DSM 273 / BCRC 81028 / 2530) (Pelodictyon luteolum).